Reading from the N-terminus, the 631-residue chain is Dolichyl-diphosphooligosaccharide--protein glycosyltransferase subunit 2 (631 aa).

Positions 1–22 (MAPPGSSAVFLLALTITASTQA) are cleaved as a signal peptide. The Lumenal portion of the chain corresponds to 23 to 540 (LTPTHYLTKH…REPEKRPPTV (518 aa)). An N-linked (GlcNAc...) asparagine glycan is attached at asparagine 106. Lysine 154 is covalently cross-linked (Glycyl lysine isopeptide (Lys-Gly) (interchain with G-Cter in ubiquitin)). Residues 541 to 561 (VSNTFTALILSPLLLLFALWI) traverse the membrane as a helical segment. The Cytoplasmic segment spans residues 562 to 571 (RIGANVSNFT). The chain crosses the membrane as a helical span at residues 572-592 (FAPSTVIFHLGHAAMLGLMYV). The Lumenal portion of the chain corresponds to 593–596 (YWTQ). A helical transmembrane segment spans residues 597–617 (LNMFQTLKYLAVLGTVTFLAG). Residues 618–631 (NRMLAQQAVKRTAH) lie on the Cytoplasmic side of the membrane.

Belongs to the SWP1 family. In terms of assembly, component of the oligosaccharyltransferase (OST) complex. OST exists in two different complex forms which contain common core subunits RPN1, RPN2, OST48, OST4, DAD1 and TMEM258, either STT3A or STT3B as catalytic subunits, and form-specific accessory subunits. STT3A complex assembly occurs through the formation of 3 subcomplexes. Subcomplex 1 contains RPN1 and TMEM258, subcomplex 2 contains the STT3A-specific subunits STT3A, DC2/OSTC, and KCP2 as well as the core subunit OST4, and subcomplex 3 contains RPN2, DAD1, and OST48. The STT3A complex can form stable complexes with the Sec61 complex or with both the Sec61 and TRAP complexes. Interacts with DDI2. Interacts with TMEM35A/NACHO.

Its subcellular location is the endoplasmic reticulum. It localises to the endoplasmic reticulum membrane. It participates in protein modification; protein glycosylation. In terms of biological role, subunit of the oligosaccharyl transferase (OST) complex that catalyzes the initial transfer of a defined glycan (Glc(3)Man(9)GlcNAc(2) in eukaryotes) from the lipid carrier dolichol-pyrophosphate to an asparagine residue within an Asn-X-Ser/Thr consensus motif in nascent polypeptide chains, the first step in protein N-glycosylation. N-glycosylation occurs cotranslationally and the complex associates with the Sec61 complex at the channel-forming translocon complex that mediates protein translocation across the endoplasmic reticulum (ER). All subunits are required for a maximal enzyme activity. This chain is Dolichyl-diphosphooligosaccharide--protein glycosyltransferase subunit 2, found in Rattus norvegicus (Rat).